The primary structure comprises 307 residues: Mitochondrial 2-oxodicarboxylate carrier 2 (307 aa).

The next 6 helical transmembrane spans lie at 10–30 (LPFI…LTVM), 76–95 (SRLY…KRAT), 122–142 (IAAG…FELI), 171–191 (GLYK…GGYF), 215–235 (LIAG…FDVV), and 280–300 (CRLA…MNFF). Solcar repeat units lie at residues 10 to 106 (LPFI…YQKI), 116 to 200 (TTQK…VRNS), and 209 to 299 (QKTR…MMNF).

This sequence belongs to the mitochondrial carrier (TC 2.A.29) family.

The protein localises to the mitochondrion inner membrane. In terms of biological role, transports C5-C7 oxodicarboxylates across the inner membranes of mitochondria. Can transport 2-oxoadipate, 2-oxoglutarate, adipate, glutarate, 2-oxopimelate, oxaloacetate, citrate and malate. The main physiological role is probably to supply 2-oxoadipate and 2-oxoglutarate from the mitochondrial matrix to the cytosol where they are used in the biosynthesis of lysine and glutamate, respectively, and in lysine catabolism. In Saccharomyces cerevisiae (strain ATCC 204508 / S288c) (Baker's yeast), this protein is Mitochondrial 2-oxodicarboxylate carrier 2 (ODC2).